Here is a 195-residue protein sequence, read N- to C-terminus: Ras-related protein rac-2 (195 aa).

10-17 serves as a coordination point for GTP; sequence GDGAVGKT. The Effector region motif lies at 32–40; the sequence is YILTVFDTY. GTP is bound by residues 57–61 and 115–118; these read DTAGQ and TKAD. The disordered stretch occupies residues 176-195; that stretch reads GLTPPQTPQTRAKKSNCTVL. Residue Cys192 is modified to Cysteine methyl ester. The S-geranylgeranyl cysteine moiety is linked to residue Cys192. A propeptide spans 193-195 (removed in mature form); it reads TVL.

This sequence belongs to the small GTPase superfamily. Rho family.

The protein resides in the cell membrane. Its function is as follows. During gonad morphogenesis, plays a role in distal tip cell (DTC)-mediated guidance of gonad elongation. This chain is Ras-related protein rac-2 (rac-2), found in Caenorhabditis elegans.